A 410-amino-acid polypeptide reads, in one-letter code: ATP phosphoribosyltransferase regulatory subunit (410 aa).

Belongs to the class-II aminoacyl-tRNA synthetase family. HisZ subfamily. In terms of assembly, heteromultimer composed of HisG and HisZ subunits.

The protein resides in the cytoplasm. It participates in amino-acid biosynthesis; L-histidine biosynthesis; L-histidine from 5-phospho-alpha-D-ribose 1-diphosphate: step 1/9. Its function is as follows. Required for the first step of histidine biosynthesis. May allow the feedback regulation of ATP phosphoribosyltransferase activity by histidine. The polypeptide is ATP phosphoribosyltransferase regulatory subunit (Synechococcus sp. (strain JA-3-3Ab) (Cyanobacteria bacterium Yellowstone A-Prime)).